A 121-amino-acid polypeptide reads, in one-letter code: Large ribosomal subunit protein bL12 (121 aa).

The protein belongs to the bacterial ribosomal protein bL12 family. As to quaternary structure, homodimer. Part of the ribosomal stalk of the 50S ribosomal subunit. Forms a multimeric L10(L12)X complex, where L10 forms an elongated spine to which 2 to 4 L12 dimers bind in a sequential fashion. Binds GTP-bound translation factors.

Functionally, forms part of the ribosomal stalk which helps the ribosome interact with GTP-bound translation factors. Is thus essential for accurate translation. This is Large ribosomal subunit protein bL12 from Xanthomonas campestris pv. campestris (strain B100).